Here is a 467-residue protein sequence, read N- to C-terminus: Nuclear distribution protein PAC1 (467 aa).

Positions 62–96 (GSIIRLQRAITKLEQKCDALQQELDDKTKQLETIV) form a coiled coil. 7 WD repeats span residues 121 to 160 (QNESPVTAIKLHPSLAIVYVGTDTGRLIAYDILNYTIPLA), 164 to 212 (AHSK…GELK), 219 to 262 (AHDS…QSFS), 264 to 302 (HSEWVKSIDVLDEYILSGSLDSTLRLTHWPSGNGLSVGT), 325 to 365 (PYRD…LKPN), 385 to 424 (GHTSWVKDLKLRGDHLFSCSDDETIKCWDLNTGNCVKTWS), and 426 to 466 (IHNN…VKII).

It belongs to the WD repeat LIS1/nudF family. In terms of assembly, self-associates. Interacts with NDL1 and dynein.

The protein localises to the cytoplasm. The protein resides in the cytoskeleton. It is found in the spindle pole. Positively regulates the activity of the minus-end directed microtubule motor protein dynein. Plays a central role in positioning the mitotic spindle at the bud neck during cell division. Targets cytoplasmic dynein to microtubule plus ends, thereby promoting dynein-mediated microtubule sliding along the bud cortex and consequently the movement of the mitotic spindle to the bud neck. The polypeptide is Nuclear distribution protein PAC1 (Candida glabrata (strain ATCC 2001 / BCRC 20586 / JCM 3761 / NBRC 0622 / NRRL Y-65 / CBS 138) (Yeast)).